The chain runs to 156 residues: Transcriptional repressor NrdR (156 aa).

Residues 3–34 (CPKCSSTHSRVVDSRHADDANAIRRRRECENC) fold into a zinc finger. Residues 49–139 (LIVVKKDGTR…VYKEFKDVDQ (91 aa)) enclose the ATP-cone domain.

Belongs to the NrdR family. Zn(2+) is required as a cofactor.

Negatively regulates transcription of bacterial ribonucleotide reductase nrd genes and operons by binding to NrdR-boxes. In Staphylococcus haemolyticus (strain JCSC1435), this protein is Transcriptional repressor NrdR.